Here is a 743-residue protein sequence, read N- to C-terminus: Capsid protein (743 aa).

Residues 665–706 form a disordered region; that stretch reads YVPPEEDFNIQERQQREQRPWTSESESEAEAQEETQAGSVRE.

The protein belongs to the anelloviridae capsid protein family.

It localises to the virion. Self assemble to form an icosahedral capsid. This is Capsid protein from Torque teno virus (isolate Human/China/CT39F/2001) (TTV).